Consider the following 201-residue polypeptide: FMN-dependent NADH:quinone oxidoreductase (201 aa).

Residues S10, 16–18 (SQS), 96–99 (MYNF), and 140–143 (SRGG) contribute to the FMN site.

This sequence belongs to the azoreductase type 1 family. As to quaternary structure, homodimer. It depends on FMN as a cofactor.

It carries out the reaction 2 a quinone + NADH + H(+) = 2 a 1,4-benzosemiquinone + NAD(+). The enzyme catalyses N,N-dimethyl-1,4-phenylenediamine + anthranilate + 2 NAD(+) = 2-(4-dimethylaminophenyl)diazenylbenzoate + 2 NADH + 2 H(+). Its function is as follows. Quinone reductase that provides resistance to thiol-specific stress caused by electrophilic quinones. Functionally, also exhibits azoreductase activity. Catalyzes the reductive cleavage of the azo bond in aromatic azo compounds to the corresponding amines. The sequence is that of FMN-dependent NADH:quinone oxidoreductase from Salmonella arizonae (strain ATCC BAA-731 / CDC346-86 / RSK2980).